The primary structure comprises 277 residues: Small ribosomal subunit protein uS3 (277 aa).

A KH type-2 domain is found at 43–111; that stretch reads IRKVMNKDLE…QVQLNIFEVK (69 aa). The interval 216–277 is disordered; it reads FEEQQAQQGN…EAAVEPETKE (62 aa). The span at 264–277 shows a compositional bias: basic and acidic residues; sequence EVSKEAAVEPETKE.

Belongs to the universal ribosomal protein uS3 family. Part of the 30S ribosomal subunit. Forms a tight complex with proteins S10 and S14.

Functionally, binds the lower part of the 30S subunit head. Binds mRNA in the 70S ribosome, positioning it for translation. The polypeptide is Small ribosomal subunit protein uS3 (Bifidobacterium animalis subsp. lactis (strain AD011)).